A 63-amino-acid chain; its full sequence is Large ribosomal subunit protein bL28 (63 aa).

Belongs to the bacterial ribosomal protein bL28 family.

In Clostridium perfringens (strain ATCC 13124 / DSM 756 / JCM 1290 / NCIMB 6125 / NCTC 8237 / Type A), this protein is Large ribosomal subunit protein bL28.